The following is a 103-amino-acid chain: Co-chaperonin GroES (103 aa).

It belongs to the GroES chaperonin family. In terms of assembly, heptamer of 7 subunits arranged in a ring. Interacts with the chaperonin GroEL.

The protein localises to the cytoplasm. Functionally, together with the chaperonin GroEL, plays an essential role in assisting protein folding. The GroEL-GroES system forms a nano-cage that allows encapsulation of the non-native substrate proteins and provides a physical environment optimized to promote and accelerate protein folding. GroES binds to the apical surface of the GroEL ring, thereby capping the opening of the GroEL channel. The sequence is that of Co-chaperonin GroES from Rippkaea orientalis (strain PCC 8801 / RF-1) (Cyanothece sp. (strain PCC 8801)).